We begin with the raw amino-acid sequence, 70 residues long: Toxin Isom2 (70 aa).

The 64-residue stretch at 2-65 folds into the LCN-type CS-alpha/beta domain; that stretch reads KNGYAVDSSG…ISDTRKKYCD (64 aa). Disulfide bonds link cysteine 16-cysteine 37, cysteine 22-cysteine 42, cysteine 26-cysteine 44, and cysteine 38-cysteine 64.

In terms of tissue distribution, expressed by the venom gland.

The protein localises to the secreted. Its function is as follows. Excitatory insect beta-toxins induce a spastic paralysis. They bind voltage-independently at site-4 of sodium channels (Nav) and shift the voltage of activation toward more negative potentials thereby affecting sodium channel activation and promoting spontaneous and repetitive firing. The chain is Toxin Isom2 from Isometrus vittatus (Bark scorpion).